The sequence spans 827 residues: Mitogen-activated protein kinase kinase kinase kinase 1 (827 aa).

The region spanning 17–274 (YDLLQRLGGG…ATKMLSHQLV (258 aa)) is the Protein kinase domain. Residues 23–31 (LGGGTYGEV) and lysine 46 contribute to the ATP site. Catalysis depends on aspartate 137, which acts as the Proton acceptor. Threonine 165 is modified (phosphothreonine; by autocatalysis). Serine 171 is subject to Phosphoserine; by autocatalysis. At threonine 175 the chain carries Phosphothreonine; by autocatalysis. Residues 296–315 (KGLPVDIEDEEPEPPPAIPR) form a disordered region. Threonine 354 is subject to Phosphothreonine; by autocatalysis. A disordered region spans residues 359 to 485 (PPAHFGSTSP…KMRGKMENEK (127 aa)). A phosphoserine mark is found at serine 373, serine 375, serine 403, serine 405, and serine 419. The segment covering 374–383 (DSDDDYDDVD) has biased composition (acidic residues). 2 stretches are compositionally biased toward pro residues: residues 429–443 (GPPP…PPAT) and 461–471 (APEPGQPPLVP). A compositionally biased stretch (basic and acidic residues) spans 472-485 (PRKEKMRGKMENEK). Positions 501 to 806 (PLQIHSTAAW…TFRLLCSPRP (306 aa)) constitute a CNH domain. Position 592 is a phosphoserine (serine 592).

The protein belongs to the protein kinase superfamily. STE Ser/Thr protein kinase family. STE20 subfamily. Interacts with MAP3K1. Interacts with FBXW8. Interacts with CLNK (via its SH2 domain). Mg(2+) serves as cofactor. In terms of processing, autophosphorylates: phosphorylation promotes ubiquitination by the Cul7-RING(FBXW8) ubiquitin-protein ligase complex, leading to its degradation by the proteasome. Tyrosine-phosphorylated after activation of hemopoietic cells. Post-translationally, ubiquitinated by the Cul7-RING(FBXW8) ubiquitin-protein ligase complex following autophosphorylation, leading to its degradation by the proteasome. As to expression, expressed in hemopoietic cells (at protein level). Ubiquitously expressed in all tissues examined at embryonic stage 16.5 dpc with high levels in lung, heart and fetal liver. In the neonate, expression is restricted to the tissues which undergo lineage decisions, lung, thymus, liver, kidney and brain. In the adult, expression is limited to hemopoietic organs, thymus, bone marrow, and spleen and to the testis.

It carries out the reaction L-seryl-[protein] + ATP = O-phospho-L-seryl-[protein] + ADP + H(+). It catalyses the reaction L-threonyl-[protein] + ATP = O-phospho-L-threonyl-[protein] + ADP + H(+). Serine/threonine-protein kinase, which plays a role in the response to environmental stress. Appears to act upstream of the JUN N-terminal pathway. Activator of the Hippo signaling pathway which plays a pivotal role in organ size control and tumor suppression by restricting proliferation and promoting apoptosis. MAP4Ks act in parallel to and are partially redundant with STK3/MST2 and STK4/MST2 in the phosphorylation and activation of LATS1/2, and establish MAP4Ks as components of the expanded Hippo pathway. May play a role in hematopoietic lineage decisions and growth regulation. Together with CLNK, it enhances CD3-triggered activation of T-cells and subsequent IL2 production. In Mus musculus (Mouse), this protein is Mitogen-activated protein kinase kinase kinase kinase 1 (Map4k1).